Consider the following 64-residue polypeptide: Fatty acid synthase (64 aa).

Residues Ala-1–Leu-64 enclose the Carrier domain. Ser-38 is modified (O-(pantetheine 4'-phosphoryl)serine; alternate). Ser-38 is modified (phosphoserine; alternate).

In terms of assembly, homodimer which is arranged in a head to tail fashion. Interacts with CEACAM1; this interaction is insulin and phosphorylation-dependent; reduces fatty-acid synthase activity.

It localises to the cytoplasm. Its subcellular location is the melanosome. The enzyme catalyses acetyl-CoA + n malonyl-CoA + 2n NADPH + 2n H(+) = a long-chain fatty acid + (n+1) CoA + n CO2 + 2n NADP(+).. Fatty acid synthetase catalyzes the formation of long-chain fatty acids from acetyl-CoA, malonyl-CoA and NADPH. This multifunctional protein has 7 catalytic activities as an acyl carrier protein. The protein is Fatty acid synthase (FASN) of Oryctolagus cuniculus (Rabbit).